Consider the following 134-residue polypeptide: Small ribosomal subunit protein bS6 (134 aa).

Residues 113-122 (NRDIKEKEQP) show a composition bias toward basic and acidic residues. The tract at residues 113–134 (NRDIKEKEQPSESNVDADLKVN) is disordered.

The protein belongs to the bacterial ribosomal protein bS6 family.

Binds together with bS18 to 16S ribosomal RNA. This chain is Small ribosomal subunit protein bS6, found in Borrelia duttonii (strain Ly).